The sequence spans 782 residues: Cyclic nucleotide-gated channel beta-3 (782 aa).

Disordered stretches follow at residues M1–K111 and G147–Q168. Over M1–Y213 the chain is Cytoplasmic. Composition is skewed to basic and acidic residues over residues K13–P25 and E57–L73. Polar residues-rich tracts occupy residues R74–Q83 and P152–Q168. A helical membrane pass occupies residues L214–F237. Residues P238–N244 lie on the Extracellular side of the membrane. Residues T245–L265 traverse the membrane as a helical segment. Topologically, residues I266–K294 are cytoplasmic. Residues F295–F312 traverse the membrane as a helical segment. At G313–N315 the chain is on the extracellular side. A helical membrane pass occupies residues P316–F330. Topologically, residues E331–A343 are cytoplasmic. Residues A343–A442 form an ion conduction pathway region. Residues Y344–Y366 traverse the membrane as a helical segment. Residues Y367–K388 lie on the Extracellular side of the membrane. Transmembrane regions (helical) follow at residues Y389–I415 and V416–I440. A selectivity filter region spans residues T402–G405. Residues G441 to Q782 are Cytoplasmic-facing. A C-linker region spans residues A445–K521. The tract at residues T525 to L641 is cyclic nucleotide-binding domain. Residues G586, E587, R599, and T600 each contribute to the 3',5'-cyclic GMP site. The segment at E692–L724 is disordered. Over residues G705–L724 the composition is skewed to basic and acidic residues.

It belongs to the cyclic nucleotide-gated cation channel (TC 1.A.1.5) family. CNGB3 subfamily. As to quaternary structure, forms heterotetrameric channels composed of CNGA3 and CNGB3 subunits with 3:1 stoichiometry.

It localises to the cell membrane. It catalyses the reaction Ca(2+)(in) = Ca(2+)(out). It carries out the reaction Na(+)(in) = Na(+)(out). The enzyme catalyses K(+)(in) = K(+)(out). The catalysed reaction is NH4(+)(in) = NH4(+)(out). It catalyses the reaction Rb(+)(in) = Rb(+)(out). It carries out the reaction Li(+)(in) = Li(+)(out). The enzyme catalyses Cs(+)(in) = Cs(+)(out). Its function is as follows. Pore-forming subunit of the cone cyclic nucleotide-gated channel. Mediates cone photoresponses at bright light converting transient changes in intracellular cGMP levels into electrical signals. In the dark, cGMP levels are high and keep the channel open enabling a steady inward current carried by Na(+) and Ca(2+) ions that leads to membrane depolarization and neurotransmitter release from synaptic terminals. Upon photon absorption cGMP levels decline leading to channel closure and membrane hyperpolarization that ultimately slows neurotransmitter release and signals the presence of light, the end point of the phototransduction cascade. Conducts cGMP- and cAMP-gated ion currents, with permeability for monovalent and divalent cations. In Canis lupus familiaris (Dog), this protein is Cyclic nucleotide-gated channel beta-3.